The primary structure comprises 633 residues: Probable potassium transport system protein Kup 3 (633 aa).

12 helical membrane-spanning segments follow: residues 24-44 (LVLAALGVVYGDIGTSPLYAF), 61-81 (VLGILSLIVWALTIVVTLKYV), 114-134 (LVLGVIGASLFLGDAIITPAI), 148-168 (PALSNWVVPITLTIIAVLFFV), 180-200 (FGPVTALWFIVLGVSGAIHIF), 222-242 (IGSAIAVLGAVFLAVTGAEAL), 258-278 (WFSLVFPSLLLNYFGQGAFVL), 298-318 (IPMVCLATAATVIASQAVISG), 348-368 (IFMPQVNNLLFIFVAALVLFF), 377-397 (AYGIAVTGEMFITSILLFIVM), 405-425 (LTAALAVIVPITLIDAGFLAA), and 427-447 (IAKFAEGGWVPVAVASTMALI).

The protein belongs to the HAK/KUP transporter (TC 2.A.72) family.

It localises to the cell inner membrane. The enzyme catalyses K(+)(in) + H(+)(in) = K(+)(out) + H(+)(out). In terms of biological role, transport of potassium into the cell. Likely operates as a K(+):H(+) symporter. This Rhizobium johnstonii (strain DSM 114642 / LMG 32736 / 3841) (Rhizobium leguminosarum bv. viciae) protein is Probable potassium transport system protein Kup 3.